Consider the following 240-residue polypeptide: Uridylate kinase (240 aa).

12-15 (KLSG) lines the ATP pocket. An involved in allosteric activation by GTP region spans residues 20–25 (GEQGFG). G54 contributes to the UMP binding site. ATP is bound by residues G55 and R59. Residues D74 and 135-142 (TGNPYFST) each bind UMP. Positions 163, 169, and 172 each coordinate ATP.

This sequence belongs to the UMP kinase family. In terms of assembly, homohexamer.

It is found in the cytoplasm. The catalysed reaction is UMP + ATP = UDP + ADP. It participates in pyrimidine metabolism; CTP biosynthesis via de novo pathway; UDP from UMP (UMPK route): step 1/1. With respect to regulation, allosterically activated by GTP. Inhibited by UTP. Catalyzes the reversible phosphorylation of UMP to UDP. The polypeptide is Uridylate kinase (Bacillus anthracis).